Reading from the N-terminus, the 607-residue chain is Isocitrate dehydrogenase kinase/phosphatase (607 aa).

ATP is bound by residues 328-334 and Lys-349; that span reads APGIKGL. Asp-384 is a catalytic residue.

This sequence belongs to the AceK family.

Its subcellular location is the cytoplasm. It carries out the reaction L-seryl-[isocitrate dehydrogenase] + ATP = O-phospho-L-seryl-[isocitrate dehydrogenase] + ADP + H(+). Its function is as follows. Bifunctional enzyme which can phosphorylate or dephosphorylate isocitrate dehydrogenase (IDH) on a specific serine residue. This is a regulatory mechanism which enables bacteria to bypass the Krebs cycle via the glyoxylate shunt in response to the source of carbon. When bacteria are grown on glucose, IDH is fully active and unphosphorylated, but when grown on acetate or ethanol, the activity of IDH declines drastically concomitant with its phosphorylation. The chain is Isocitrate dehydrogenase kinase/phosphatase from Cupriavidus metallidurans (strain ATCC 43123 / DSM 2839 / NBRC 102507 / CH34) (Ralstonia metallidurans).